Reading from the N-terminus, the 248-residue chain is tRNA (guanine-N(1)-)-methyltransferase (248 aa).

Residues Gly117 and Ile137–Leu142 contribute to the S-adenosyl-L-methionine site.

The protein belongs to the RNA methyltransferase TrmD family. In terms of assembly, homodimer.

It is found in the cytoplasm. The enzyme catalyses guanosine(37) in tRNA + S-adenosyl-L-methionine = N(1)-methylguanosine(37) in tRNA + S-adenosyl-L-homocysteine + H(+). Specifically methylates guanosine-37 in various tRNAs. This chain is tRNA (guanine-N(1)-)-methyltransferase, found in Polynucleobacter necessarius subsp. necessarius (strain STIR1).